Consider the following 248-residue polypeptide: Geranylgeranylglyceryl phosphate synthase (248 aa).

Positions 25 and 50 each coordinate Mg(2+). Sn-glycerol 1-phosphate-binding positions include 170–176, 201–202, and 223–224; these read YLEAGSG, GG, and GT.

Belongs to the GGGP/HepGP synthase family. Group II subfamily. It depends on Mg(2+) as a cofactor.

The protein localises to the cytoplasm. The enzyme catalyses sn-glycerol 1-phosphate + (2E,6E,10E)-geranylgeranyl diphosphate = sn-3-O-(geranylgeranyl)glycerol 1-phosphate + diphosphate. It functions in the pathway membrane lipid metabolism; glycerophospholipid metabolism. Its function is as follows. Prenyltransferase that catalyzes the transfer of the geranylgeranyl moiety of geranylgeranyl diphosphate (GGPP) to the C3 hydroxyl of sn-glycerol-1-phosphate (G1P). This reaction is the first ether-bond-formation step in the biosynthesis of archaeal membrane lipids. In Methanococcus aeolicus (strain ATCC BAA-1280 / DSM 17508 / OCM 812 / Nankai-3), this protein is Geranylgeranylglyceryl phosphate synthase.